We begin with the raw amino-acid sequence, 492 residues long: Catalase-3 (492 aa).

Active-site residues include His65 and Asn138. Tyr348 contributes to the heme binding site.

It belongs to the catalase family. Homotetramer and heterotetramer. At least six or seven isozymes are produced from a mixture of 3 gene products. Interacts with NCA1. Interacts with LSD1. It depends on heme as a cofactor.

The protein resides in the peroxisome. It carries out the reaction 2 H2O2 = O2 + 2 H2O. Occurs in almost all aerobically respiring organisms and serves to protect cells from the toxic effects of hydrogen peroxide. The protein is Catalase-3 (CAT3) of Arabidopsis thaliana (Mouse-ear cress).